Reading from the N-terminus, the 63-residue chain is Large ribosomal subunit protein uL29 (63 aa).

It belongs to the universal ribosomal protein uL29 family.

The sequence is that of Large ribosomal subunit protein uL29 from Erwinia tasmaniensis (strain DSM 17950 / CFBP 7177 / CIP 109463 / NCPPB 4357 / Et1/99).